The primary structure comprises 74 residues: Translation initiation factor IF-1 (74 aa).

The S1-like domain maps to 1–72 (MAKQDAIEME…TKGRITYRLR (72 aa)).

This sequence belongs to the IF-1 family. In terms of assembly, component of the 30S ribosomal translation pre-initiation complex which assembles on the 30S ribosome in the order IF-2 and IF-3, IF-1 and N-formylmethionyl-tRNA(fMet); mRNA recruitment can occur at any time during PIC assembly.

The protein resides in the cytoplasm. In terms of biological role, one of the essential components for the initiation of protein synthesis. Stabilizes the binding of IF-2 and IF-3 on the 30S subunit to which N-formylmethionyl-tRNA(fMet) subsequently binds. Helps modulate mRNA selection, yielding the 30S pre-initiation complex (PIC). Upon addition of the 50S ribosomal subunit IF-1, IF-2 and IF-3 are released leaving the mature 70S translation initiation complex. This Acaryochloris marina (strain MBIC 11017) protein is Translation initiation factor IF-1.